We begin with the raw amino-acid sequence, 145 residues long: Superoxide dismutase [Mn/Fe] (145 aa).

His-10 and His-64 together coordinate Fe(3+). His-10 and His-64 together coordinate Mn(2+). The disordered stretch occupies residues 126–145; it reads TSTANQDTPISEGKKPILGL.

Belongs to the iron/manganese superoxide dismutase family. The cofactor is Mn(2+). Requires Fe(3+) as cofactor.

The catalysed reaction is 2 superoxide + 2 H(+) = H2O2 + O2. In terms of biological role, destroys superoxide anion radicals which are normally produced within the cells and which are toxic to biological systems. Catalyzes the dismutation of superoxide anion radicals into O2 and H2O2 by successive reduction and oxidation of the transition metal ion at the active site. This chain is Superoxide dismutase [Mn/Fe] (sodA), found in Streptococcus oralis.